Consider the following 451-residue polypeptide: Tubulin gamma-1 chain (451 aa).

S131 bears the Phosphoserine; by BRSK1 mark. 142-148 (AGGTGSG) contacts GTP.

This sequence belongs to the tubulin family. In terms of assembly, component of the gamma-tubulin ring complex (gTuRC) consisting of TUBGCP2, TUBGCP3, TUBGCP4, TUBGCP5 and TUBGCP6 and gamma-tubulin TUBG1 or TUBG2. TUBGCP2, TUBGCP3, TUBGCP4, TUBGCP5 and TUBGCP6 assemble in a 5:5:2:1:1 stoichiometry; each is associated with a gamma-tubulin, thereby arranging 14 gamma-tubulins in a helical manner. Gamma-tubulin at the first position is blocked by TUBGCP3 at the last position, allowing 13 protafilaments to grow into a microtubule. The gTuRC (via TUBGCP3 and TUBGCP6) interacts with ACTB and MZT1; the interactions form a luminal bridge that stabilizes the initial structure during complex assembly. The gTuRC (via TUBGCP2) interacts with MZT2A/MZT2B and CDK5RAP2 (via CM1 motif); the interactions play a role in gTuRC activation. Interacts with alpha-beta tubulin heterodimers; the interaction allows microtubules to nucleate from the gTuRC. Interacts with B9D2. Interacts with CDK5RAP2; the interaction is leading to centrosomal localization of TUBG1 and CDK5RAP2. Interacts with CIMAP3. Interacts with SAS6 and NUP62 at the centrosome. Interacts with EML3 (phosphorylated at 'Thr-881') and HAUS8. Interacts with DNM2; this interaction may participate in centrosome cohesion. Interacts with CCDC66. Phosphorylation at Ser-131 by BRSK1 regulates centrosome duplication, possibly by mediating relocation of gamma-tubulin and its associated proteins from the cytoplasm to the centrosome.

It localises to the cytoplasm. It is found in the cytoskeleton. Its subcellular location is the microtubule organizing center. The protein localises to the centrosome. The protein resides in the spindle. Its function is as follows. Tubulin is the major constituent of microtubules, protein filaments consisting of alpha- and beta-tubulin heterodimers. Gamma-tubulin is a key component of the gamma-tubulin ring complex (gTuRC) which mediates microtubule nucleation. The gTuRC regulates the minus-end nucleation of alpha-beta tubulin heterodimers that grow into microtubule protafilaments, a critical step in centrosome duplication and spindle formation. The polypeptide is Tubulin gamma-1 chain (Homo sapiens (Human)).